Consider the following 231-residue polypeptide: MADDRVAGGATPPPPPPPPPLDASAFTHTPYYCEENVHLLCKELIRSGISDPAGTDLYAVFISNEEKKVPLWYQKASHSGDGFVLWDYHVICIQSRRKNGEVLDLVWDLDSSLPFPCSFIQYVSDAIRPLSFGNSTYRRLFRVIHAPVFLRSFASDRSHMKDHAGNWIQLPPKYESIVAEDGTTNNLNEYITMSMDDVKDLESMADDVYSSKHGVVINETILPEFFSRLPG.

The disordered stretch occupies residues 1 to 21 (MADDRVAGGATPPPPPPPPPL). Positions 11 to 21 (TPPPPPPPPPL) are enriched in pro residues. Catalysis depends on residues Cys33, His89, and Asp108.

Belongs to the NTAQ1 family. In terms of assembly, monomer.

It carries out the reaction N-terminal L-glutaminyl-[protein] + H2O = N-terminal L-glutamyl-[protein] + NH4(+). In terms of biological role, mediates the side-chain deamidation of N-terminal glutamine residues to glutamate, an important step in N-end rule pathway of protein degradation. Conversion of the resulting N-terminal glutamine to glutamate renders the protein susceptible to arginylation, polyubiquitination and degradation as specified by the N-end rule. Does not act on substrates with internal or C-terminal glutamine and does not act on non-glutamine residues in any position. This chain is Protein N-terminal glutamine amidohydrolase, found in Oryza sativa subsp. indica (Rice).